The chain runs to 131 residues: Phosphoribosyl-AMP cyclohydrolase (131 aa).

A Mg(2+)-binding site is contributed by D74. A Zn(2+)-binding site is contributed by C75. Residues D76 and D78 each coordinate Mg(2+). The Zn(2+) site is built by C91 and C98.

Belongs to the PRA-CH family. As to quaternary structure, homodimer. Requires Mg(2+) as cofactor. Zn(2+) serves as cofactor.

It localises to the cytoplasm. The catalysed reaction is 1-(5-phospho-beta-D-ribosyl)-5'-AMP + H2O = 1-(5-phospho-beta-D-ribosyl)-5-[(5-phospho-beta-D-ribosylamino)methylideneamino]imidazole-4-carboxamide. The protein operates within amino-acid biosynthesis; L-histidine biosynthesis; L-histidine from 5-phospho-alpha-D-ribose 1-diphosphate: step 3/9. Functionally, catalyzes the hydrolysis of the adenine ring of phosphoribosyl-AMP. The sequence is that of Phosphoribosyl-AMP cyclohydrolase from Bradyrhizobium sp. (strain BTAi1 / ATCC BAA-1182).